Here is a 413-residue protein sequence, read N- to C-terminus: CinA-like protein (413 aa).

It belongs to the CinA family.

This is CinA-like protein from Desulfosudis oleivorans (strain DSM 6200 / JCM 39069 / Hxd3) (Desulfococcus oleovorans).